A 297-amino-acid polypeptide reads, in one-letter code: uncharacterized protein (297 aa).

The chain crosses the membrane as a helical span at residues 191–211; the sequence is VMIILSCSNITILAVLSIVGL. A compositionally biased stretch (polar residues) spans 275-287; the sequence is SKTSETQSVSGST. The tract at residues 275 to 297 is disordered; the sequence is SKTSETQSVSGSTHSDEKLTAPM. Basic and acidic residues predominate over residues 288–297; sequence HSDEKLTAPM.

It localises to the host membrane. This is an uncharacterized protein from Cryphonectria parasitica mycoreovirus 1 (strain 9B21) (CpMYRV-1).